Reading from the N-terminus, the 365-residue chain is Crh-like protein ARB_03382 (365 aa).

Residues methionine 1–alanine 25 form the signal peptide. Residues glutamine 26–lysine 302 lie on the Extracellular side of the membrane. An intrachain disulfide couples cysteine 31 to cysteine 39. Asparagine 48, asparagine 54, asparagine 63, and asparagine 77 each carry an N-linked (GlcNAc...) asparagine glycan. Residues threonine 50–valine 243 enclose the GH16 domain. Residue glutamate 125 is the Nucleophile of the active site. Glutamate 129 functions as the Proton donor in the catalytic mechanism. Residue glutamate 129 coordinates chitin. Asparagine 147 and asparagine 168 each carry an N-linked (GlcNAc...) asparagine glycan. Positions 209 and 213 each coordinate chitin. Residues isoleucine 303–cysteine 323 form a helical membrane-spanning segment. The Cytoplasmic segment spans residues cysteine 324–serine 365.

The protein belongs to the glycosyl hydrolase 16 family. CRH1 subfamily.

It localises to the membrane. The enzyme catalyses Random endo-hydrolysis of N-acetyl-beta-D-glucosaminide (1-&gt;4)-beta-linkages in chitin and chitodextrins.. Dual chitinase/transglycosylase that plays a role in cell wall architecture. Chitinase and transglycosylase activities are coupled. Required for the polysaccharide cross-linking at the septa and the cell wall. More specifically, transfers chitin to 1,6-beta-glucan in the cell wall. Plays an important role in fungal pathogenesis. Involved in cell wall assembly and regeneration, filamentation, and adherence to host cells. The sequence is that of Crh-like protein ARB_03382 from Arthroderma benhamiae (strain ATCC MYA-4681 / CBS 112371) (Trichophyton mentagrophytes).